The following is a 342-amino-acid chain: N-acetyl-gamma-glutamyl-phosphate reductase (342 aa).

Cys149 is a catalytic residue.

It belongs to the NAGSA dehydrogenase family. Type 1 subfamily.

It is found in the cytoplasm. It catalyses the reaction N-acetyl-L-glutamate 5-semialdehyde + phosphate + NADP(+) = N-acetyl-L-glutamyl 5-phosphate + NADPH + H(+). The protein operates within amino-acid biosynthesis; L-arginine biosynthesis; N(2)-acetyl-L-ornithine from L-glutamate: step 3/4. Functionally, catalyzes the NADPH-dependent reduction of N-acetyl-5-glutamyl phosphate to yield N-acetyl-L-glutamate 5-semialdehyde. The polypeptide is N-acetyl-gamma-glutamyl-phosphate reductase (Nitrosomonas eutropha (strain DSM 101675 / C91 / Nm57)).